Here is a 187-residue protein sequence, read N- to C-terminus: dCTP deaminase (187 aa).

Residues 110 to 115 (KSTYAR), 134 to 136 (TLE), Gln-155, Tyr-169, and Gln-179 contribute to the dCTP site. Catalysis depends on Glu-136, which acts as the Proton donor/acceptor.

The protein belongs to the dCTP deaminase family. Homotrimer.

The catalysed reaction is dCTP + H2O + H(+) = dUTP + NH4(+). It participates in pyrimidine metabolism; dUMP biosynthesis; dUMP from dCTP (dUTP route): step 1/2. Functionally, catalyzes the deamination of dCTP to dUTP. The sequence is that of dCTP deaminase from Bordetella pertussis (strain Tohama I / ATCC BAA-589 / NCTC 13251).